The following is a 418-amino-acid chain: Putative ion-transport protein YfeO (418 aa).

12 consecutive transmembrane segments (helical) span residues 10 to 30 (LLLS…LIVV), 54 to 74 (DSPL…GLVI), 99 to 119 (ALPG…SLGP), 120 to 140 (EHPI…RLLP), 149 to 169 (ILAS…AALI), 186 to 206 (LFAP…FFHP), 223 to 243 (ILSG…AVWC), 258 to 278 (VLVL…GGPV), 300 to 320 (DYFL…ASGF), 322 to 342 (GGRI…LHEH), 343 to 363 (VPAV…VLVV), and 371 to 391 (LFMA…CIVM).

Belongs to the chloride channel (TC 2.A.49) family.

The protein resides in the cell membrane. This chain is Putative ion-transport protein YfeO, found in Shigella boydii serotype 18 (strain CDC 3083-94 / BS512).